The sequence spans 214 residues: UPF0111 protein MJ0629 (214 aa).

This sequence belongs to the UPF0111 family.

This chain is UPF0111 protein MJ0629, found in Methanocaldococcus jannaschii (strain ATCC 43067 / DSM 2661 / JAL-1 / JCM 10045 / NBRC 100440) (Methanococcus jannaschii).